The chain runs to 314 residues: Putative S-adenosyl-L-methionine-dependent methyltransferase MAP_4191c (314 aa).

S-adenosyl-L-methionine contacts are provided by residues D138 and 167 to 168 (DL).

This sequence belongs to the UPF0677 family.

Its function is as follows. Exhibits S-adenosyl-L-methionine-dependent methyltransferase activity. The protein is Putative S-adenosyl-L-methionine-dependent methyltransferase MAP_4191c of Mycolicibacterium paratuberculosis (strain ATCC BAA-968 / K-10) (Mycobacterium paratuberculosis).